The sequence spans 341 residues: DNA-directed RNA polymerase subunit alpha (341 aa).

Positions 1 to 233 (MIRDEIPISA…NLFIPFLHAE (233 aa)) are alpha N-terminal domain (alpha-NTD). The tract at residues 265-341 (TKGVTFKHIF…NLPKNKLHFH (77 aa)) is alpha C-terminal domain (alpha-CTD).

The protein belongs to the RNA polymerase alpha chain family. In plastids the minimal PEP RNA polymerase catalytic core is composed of four subunits: alpha, beta, beta', and beta''. When a (nuclear-encoded) sigma factor is associated with the core the holoenzyme is formed, which can initiate transcription.

The protein localises to the plastid. It is found in the chloroplast. It carries out the reaction RNA(n) + a ribonucleoside 5'-triphosphate = RNA(n+1) + diphosphate. Its function is as follows. DNA-dependent RNA polymerase catalyzes the transcription of DNA into RNA using the four ribonucleoside triphosphates as substrates. In Takakia lepidozioides (Moss), this protein is DNA-directed RNA polymerase subunit alpha.